A 104-amino-acid chain; its full sequence is Large ribosomal subunit protein uL24 (104 aa).

This sequence belongs to the universal ribosomal protein uL24 family. Part of the 50S ribosomal subunit.

Functionally, one of two assembly initiator proteins, it binds directly to the 5'-end of the 23S rRNA, where it nucleates assembly of the 50S subunit. In terms of biological role, one of the proteins that surrounds the polypeptide exit tunnel on the outside of the subunit. The protein is Large ribosomal subunit protein uL24 of Bradyrhizobium diazoefficiens (strain JCM 10833 / BCRC 13528 / IAM 13628 / NBRC 14792 / USDA 110).